An 89-amino-acid chain; its full sequence is Small ribosomal subunit protein uS15 (89 aa).

It belongs to the universal ribosomal protein uS15 family. Part of the 30S ribosomal subunit. Forms a bridge to the 50S subunit in the 70S ribosome, contacting the 23S rRNA.

In terms of biological role, one of the primary rRNA binding proteins, it binds directly to 16S rRNA where it helps nucleate assembly of the platform of the 30S subunit by binding and bridging several RNA helices of the 16S rRNA. Its function is as follows. Forms an intersubunit bridge (bridge B4) with the 23S rRNA of the 50S subunit in the ribosome. This Agrobacterium fabrum (strain C58 / ATCC 33970) (Agrobacterium tumefaciens (strain C58)) protein is Small ribosomal subunit protein uS15.